The sequence spans 463 residues: tRNA (guanine(37)-N(1))-methyltransferase (463 aa).

S-adenosyl-L-methionine is bound by residues H207, 245 to 246 (DL), 274 to 275 (DG), and N305.

It belongs to the class I-like SAM-binding methyltransferase superfamily. TRM5/TYW2 family. Monomer.

Its subcellular location is the mitochondrion matrix. It is found in the nucleus. The protein localises to the cytoplasm. The catalysed reaction is guanosine(37) in tRNA + S-adenosyl-L-methionine = N(1)-methylguanosine(37) in tRNA + S-adenosyl-L-homocysteine + H(+). Its function is as follows. Specifically methylates the N1 position of guanosine-37 in various cytoplasmic and mitochondrial tRNAs. Methylation is not dependent on the nature of the nucleoside 5' of the target nucleoside. This is the first step in the biosynthesis of wybutosine (yW), a modified base adjacent to the anticodon of tRNAs and required for accurate decoding. The sequence is that of tRNA (guanine(37)-N(1))-methyltransferase from Pediculus humanus subsp. corporis (Body louse).